A 163-amino-acid polypeptide reads, in one-letter code: Large ribosomal subunit protein uL10 (163 aa).

It belongs to the universal ribosomal protein uL10 family. As to quaternary structure, part of the ribosomal stalk of the 50S ribosomal subunit. The N-terminus interacts with L11 and the large rRNA to form the base of the stalk. The C-terminus forms an elongated spine to which L12 dimers bind in a sequential fashion forming a multimeric L10(L12)X complex.

In terms of biological role, forms part of the ribosomal stalk, playing a central role in the interaction of the ribosome with GTP-bound translation factors. The sequence is that of Large ribosomal subunit protein uL10 from Actinobacillus succinogenes (strain ATCC 55618 / DSM 22257 / CCUG 43843 / 130Z).